The chain runs to 309 residues: Enoyl-CoA hydratase 2, peroxisomal (309 aa).

Residues histidine 95–glycine 96, lysine 124, aspartate 208–histidine 213, glycine 231, and phenylalanine 261 each bind substrate. Positions proline 183–valine 295 constitute a MaoC-like domain. The Microbody targeting signal motif lies at serine 307–leucine 309.

As to expression, ubiquitous.

It localises to the peroxisome. The enzyme catalyses a (3R)-3-hydroxyacyl-CoA = a (2E)-enoyl-CoA + H2O. It functions in the pathway lipid metabolism; fatty acid beta-oxidation. In terms of biological role, bidirectional monofunctional enoyl-CoA hydratase 2 involved in the degradation of even cis-unsaturated fatty acids. Devoid of 3-hydroxyacyl-CoA dehydrogenase activity. This Arabidopsis thaliana (Mouse-ear cress) protein is Enoyl-CoA hydratase 2, peroxisomal (ECH2).